We begin with the raw amino-acid sequence, 856 residues long: cGMP-dependent protein kinase (856 aa).

The tract at residues 1–33 is autoinhibitory segment; it reads MDDDEIIPKKNHPSNERNKKKAILSHEDFTGED. CNMP-binding domain regions lie at residues 62 to 177, 180 to 279, 299 to 402, and 422 to 521; these read VCST…FIDS, VFDM…VVLG, IFKQ…LGNN, and IFRY…LQII. The 3',5'-cyclic GMP site is built by Lys117, Gly126, Glu127, Ala129, Arg136, and Ser137. Residues Arg477, Gly486, Glu487, Ala489, Arg496, and Thr497 each coordinate 3',5'-cyclic GMP. Residues 545–802 form the Protein kinase domain; that stretch reads LLTERIIGRG…FKDIKENSFF (258 aa). ATP is bound by residues 551–559 and Lys574; that span reads IGRGTFGIV. Asp668 (proton acceptor) is an active-site residue. The region spanning 803 to 856 is the AGC-kinase C-terminal domain; the sequence is ADFDWDRLAGRLLEPPLISKSETYAEDIDVKQIEQEEEDNANTEIDDENWDIDF. Residues 837 to 856 form a disordered region; it reads QEEEDNANTEIDDENWDIDF.

This sequence belongs to the protein kinase superfamily. AGC Ser/Thr protein kinase family. cGMP subfamily. As to quaternary structure, monomer. The cofactor is Mg(2+). Post-translationally, autophosphorylated.

It is found in the cytoplasm. The protein resides in the endoplasmic reticulum membrane. It carries out the reaction L-seryl-[protein] + ATP = O-phospho-L-seryl-[protein] + ADP + H(+). It catalyses the reaction L-threonyl-[protein] + ATP = O-phospho-L-threonyl-[protein] + ADP + H(+). Its activity is regulated as follows. Activated by cGMP. Not activated by cAMP. cGMP binding allosterically triggers a conformational change at the alpha C-helix of cGMP-binding domain 4, which bridges the regulatory and catalytic domains, causing the capping triad, composed of Arg-488, Gln-536 and Asp-537, to form and stabilize the active conformation. The cGMP-binding domains acts cooperatively to activate PKG. In terms of biological role, serine/threonine protein kinase which acts as a downstream effector of the second messenger cGMP. Controls the release of Ca(2+) from intracellular stores by regulating phosphoinositide biosynthesis. Ca(2+) signals are essential for merozoite and sporozoite invasion and egress from host hepatocytes and erythrocytes, and, in the mosquito vector, for gametocyte activation, and ookinete and sporozoite motility. During the host liver stage, regulates the initial invasion of host hepatocytes by sporozoites by regulating sporozoite motility and microneme exocytosis. Following parasite development in the hepatocytes, required for the release of merosomes, a vesicle containing the mature merozoites. During the asexual blood stage, required for the progression from schizont to the ring stage following merozoite invasion of host erythrocytes and for merozoite egress. Regulates merozoite egress by promoting the release of exonemes and micronemes which contain proteins essential for egress. Phosphorylates CDPK1 predominantly at the late schizont stage; phosphorylation at 'Ser-64' regulates CDPK1 protein-protein interaction and phosphorylation at 'Thr-231' may regulate CDPK1 kinase activity. In the mosquito vector, required for the initiation of gametogenesis induced by xanthurenic acid, specifically the gametocyte differentiation from the crescent-shaped form to the spherical form. Required for the gliding motility of ookinetes to reach and penetrate the midgut epithelium by promoting Ca(2+)-mediated activation of CDPK1 and CDPK4. Also required for microneme secretion in ookinete by promoting Ca(2+)-mediated activation of CDPK3. The polypeptide is cGMP-dependent protein kinase (Plasmodium berghei (strain Anka)).